The primary structure comprises 88 residues: Small ribosomal subunit protein bS20 (88 aa).

Positions 1–23 are enriched in basic and acidic residues; the sequence is MPNTKSAEKALRVADANRQENRR. Residues 1 to 29 are disordered; it reads MPNTKSAEKALRVADANRQENRRAKSQVK.

The protein belongs to the bacterial ribosomal protein bS20 family.

Binds directly to 16S ribosomal RNA. The polypeptide is Small ribosomal subunit protein bS20 (Dehalococcoides mccartyi (strain ATCC BAA-2100 / JCM 16839 / KCTC 5957 / BAV1)).